The sequence spans 310 residues: p-hydroxybenzoic acid efflux pump subunit AaeA (310 aa).

The helical transmembrane segment at 12 to 32 (AITLVLVILAFIAIFRAWVYY) threads the bilayer.

The protein belongs to the membrane fusion protein (MFP) (TC 8.A.1) family.

Its subcellular location is the cell inner membrane. In terms of biological role, forms an efflux pump with AaeB. The polypeptide is p-hydroxybenzoic acid efflux pump subunit AaeA (Salmonella gallinarum (strain 287/91 / NCTC 13346)).